The chain runs to 225 residues: Small ribosomal subunit protein uS3 (225 aa).

Residues 38 to 106 (IRKFVQNRFN…PVNLNIIEVK (69 aa)) enclose the KH type-2 domain.

It belongs to the universal ribosomal protein uS3 family. Part of the 30S ribosomal subunit. Forms a tight complex with proteins S10 and S14.

Binds the lower part of the 30S subunit head. Binds mRNA in the 70S ribosome, positioning it for translation. In Leptospira interrogans serogroup Icterohaemorrhagiae serovar copenhageni (strain Fiocruz L1-130), this protein is Small ribosomal subunit protein uS3.